The primary structure comprises 276 residues: MSGKARLAGVLGWPVSHSRSPRLHGFWLEQMGIDGAYLPLAVAPEHLETVIRALPRMGFAGANVTVPHKEAVMRLVDHLDPLARRIGAVNTLVVRQDGTLEGRNTDAYGFFENLRQGCPLWEPTSGPAAVIGAGGAARAVVAALADAGVPEIRLANRSRERAATLAADLGGPVTVVDWAERAESLEGCALLVNTTTLGMTGQSSLDLDLAALPTTSVVNDIVYVPLVTDLLARATARGNPIVDGLGMLLHQAVPGFEAWFGQRPQVSDQLRAFVLS.

Shikimate contacts are provided by residues Ser18–Ser20 and Thr65. Lys69 (proton acceptor) is an active-site residue. Shikimate-binding residues include Asn90 and Asp106. NADP(+) contacts are provided by residues Gly132 to Ala136 and Ile221. Tyr223 contacts shikimate. Residue Gly244 participates in NADP(+) binding.

This sequence belongs to the shikimate dehydrogenase family. Homodimer.

It catalyses the reaction shikimate + NADP(+) = 3-dehydroshikimate + NADPH + H(+). It functions in the pathway metabolic intermediate biosynthesis; chorismate biosynthesis; chorismate from D-erythrose 4-phosphate and phosphoenolpyruvate: step 4/7. Involved in the biosynthesis of the chorismate, which leads to the biosynthesis of aromatic amino acids. Catalyzes the reversible NADPH linked reduction of 3-dehydroshikimate (DHSA) to yield shikimate (SA). This Paramagnetospirillum magneticum (strain ATCC 700264 / AMB-1) (Magnetospirillum magneticum) protein is Shikimate dehydrogenase (NADP(+)).